The sequence spans 184 residues: Peptide deformylase (184 aa).

Residues Cys92 and His134 each coordinate Fe cation. Glu135 is a catalytic residue. His138 contributes to the Fe cation binding site.

It belongs to the polypeptide deformylase family. Fe(2+) is required as a cofactor.

It catalyses the reaction N-terminal N-formyl-L-methionyl-[peptide] + H2O = N-terminal L-methionyl-[peptide] + formate. Its function is as follows. Removes the formyl group from the N-terminal Met of newly synthesized proteins. Requires at least a dipeptide for an efficient rate of reaction. N-terminal L-methionine is a prerequisite for activity but the enzyme has broad specificity at other positions. This chain is Peptide deformylase, found in Psychrobacter cryohalolentis (strain ATCC BAA-1226 / DSM 17306 / VKM B-2378 / K5).